Reading from the N-terminus, the 261-residue chain is Calbindin (261 aa).

An N-acetylalanine modification is found at Ala-2. An interaction with RANBP9 region spans residues 2–7; sequence AESHLQ. 5 consecutive EF-hand domains span residues 11–46, 53–88, 98–133, 142–177, and 186–221; these read ITASQFFEIWLHFDADGSGYLEGKELQNLIQELLQA, ELSPEMKSFVDQYGQRDDGKIGIVELAHVLPTEENF, KSCEEFMKTWRKYDTDHSGFIETEELKNFLKDLLEK, KLAEYTDLMLKLFDSNNDGKLELTEMARLLPVQENF, and MCGKEFNKAFELYDQDGNGYIDENELDALLKDLCEK. Residues Asp-24, Asp-26, Ser-28, Tyr-30, and Glu-35 each contribute to the Ca(2+) site. 14 residues coordinate Ca(2+): Asp-111, Asp-113, Ser-115, Glu-122, Asp-155, Asn-157, Asp-159, Lys-161, Glu-166, Asp-199, Asp-201, Asn-203, Tyr-205, and Glu-210.

Belongs to the calbindin family. In terms of assembly, interacts with RANBP9. In terms of tissue distribution, expressed in the modiolar nerve root and in bushy neurons in the ventral cochlear nucleus (at protein level).

Buffers cytosolic calcium. May stimulate a membrane Ca(2+)-ATPase and a 3',5'-cyclic nucleotide phosphodiesterase. The chain is Calbindin (Calb1) from Mus musculus (Mouse).